Consider the following 473-residue polypeptide: 3-isopropylmalate dehydratase large subunit 2 (473 aa).

Positions 350, 410, and 413 each coordinate [4Fe-4S] cluster.

It belongs to the aconitase/IPM isomerase family. LeuC type 1 subfamily. As to quaternary structure, heterodimer of LeuC and LeuD. [4Fe-4S] cluster serves as cofactor.

It carries out the reaction (2R,3S)-3-isopropylmalate = (2S)-2-isopropylmalate. The protein operates within amino-acid biosynthesis; L-leucine biosynthesis; L-leucine from 3-methyl-2-oxobutanoate: step 2/4. In terms of biological role, catalyzes the isomerization between 2-isopropylmalate and 3-isopropylmalate, via the formation of 2-isopropylmaleate. The sequence is that of 3-isopropylmalate dehydratase large subunit 2 from Salmonella choleraesuis (strain SC-B67).